We begin with the raw amino-acid sequence, 244 residues long: L-xylulose reductase (244 aa).

The residue at position 1 (Met-1) is an N-acetylmethionine. An NADP(+)-binding site is contributed by 11 to 39 (LVTGAGKGIGRSTVLALKAAGAQVVAVSR). An Omega-N-methylarginine modification is found at Arg-21. Position 136 (Ser-136) interacts with substrate. Tyr-149 (proton acceptor) is an active-site residue. Lys-153 is an active-site residue.

Belongs to the short-chain dehydrogenases/reductases (SDR) family. As to quaternary structure, homotetramer. In terms of tissue distribution, highly expressed in kidney, liver and epididymis. Expressed at intermediate level in lung. Weakly or not expressed in brain, heart, spleen and testis.

It localises to the membrane. The protein localises to the apical cell membrane. It catalyses the reaction xylitol + NADP(+) = L-xylulose + NADPH + H(+). Functionally, catalyzes the NADPH-dependent reduction of several pentoses, tetroses, trioses, alpha-dicarbonyl compounds and L-xylulose. Participates in the uronate cycle of glucose metabolism. May play a role in the water absorption and cellular osmoregulation in the proximal renal tubules by producing xylitol, an osmolyte, thereby preventing osmolytic stress from occurring in the renal tubules. The polypeptide is L-xylulose reductase (Dcxr) (Mus musculus (Mouse)).